The sequence spans 574 residues: Pescadillo homolog (574 aa).

The disordered stretch occupies residues 289–312 (PSEPNDDTEVDEFPADPENAGLEE). Acidic residues predominate over residues 292–303 (PNDDTEVDEFPA). The 94-residue stretch at 323 to 416 (KHKSLFVGLK…LLLPVEDYFP (94 aa)) folds into the BRCT domain. Residues 452–486 (LGLDEEDDDDDDDDEEEDDDDDEEEEDKKLRQLEN) form a disordered region. The span at 453–477 (GLDEEDDDDDDDDEEEDDDDDEEEE) shows a compositional bias: acidic residues.

It belongs to the pescadillo family. In terms of assembly, component of the PeBoW complex, composed of bop1, pes1 and wdr12. The complex is held together by bop1, which interacts with pes1 via its N-terminal domain and with wdr12 via a high-affinity interaction between the seven-bladed beta-propeller domains of the 2 proteins. The PeBoW complex associates with the 66S pre-ribosome.

The protein localises to the nucleus. The protein resides in the nucleolus. Its subcellular location is the nucleoplasm. Functionally, component of the PeBoW complex, which is required for maturation of 28S and 5.8S ribosomal RNAs and formation of the 60S ribosome. Required for neural crest migration and eye development. The chain is Pescadillo homolog (pes1) from Xenopus laevis (African clawed frog).